The primary structure comprises 520 residues: MNLKQEVESRKTFAIISHPDAGKTTLTEKLLYFSGAIREAGTVKGKKTGKFATSDWMKVEQERGISVTSSVMQFDYDDYKINILDTPGHEDFSEDTYRTLMAVDSAVMVIDCAKGIEPQTLKLFKVCKMRGIPIFTFINKLDRVGKEPFELLDEIEETLNIETYPMNWPIGMGQSFFGIIDRKSKTIEPFRDEENILHLNDDFELEEDHAITNDSAFEQAIEELMLVEEAGEAFDNDALLSGDLTPVFFGSALANFGVQNFLNAYVDFAPMPNARQTKEEVEVSPFDDSFSGFIFKIQANMDPKHRDRIAFMRVVSGAFERGMDVTLQRTNKKQKITRSTSFMADDKETVNHAVAGDIIGLYDTGNYQIGDTLVGGKQTYSFQDLPQFTPEIFMKVSAKNVMKQKHFHKGIEQLVQEGAIQYYKTLHTNQIILGAVGQLQFEVFEHRMKNEYNVDVVMEPVGRKIARWIENEDQITDKMNTSRSILVKDRYDDLVFLFENEFATRWFEEKFPEIKLYSLL.

Residues 8–277 (ESRKTFAIIS…FAPMPNARQT (270 aa)) enclose the tr-type G domain. GTP is bound by residues 17–24 (SHPDAGKT), 85–89 (DTPGH), and 139–142 (NKLD).

The protein belongs to the TRAFAC class translation factor GTPase superfamily. Classic translation factor GTPase family. PrfC subfamily.

It localises to the cytoplasm. Increases the formation of ribosomal termination complexes and stimulates activities of RF-1 and RF-2. It binds guanine nucleotides and has strong preference for UGA stop codons. It may interact directly with the ribosome. The stimulation of RF-1 and RF-2 is significantly reduced by GTP and GDP, but not by GMP. This Staphylococcus aureus (strain MRSA252) protein is Peptide chain release factor 3.